The chain runs to 79 residues: Cell division protein ZapB (79 aa).

Residues 6–78 (FEKLEVKVQQ…LRALLGKMEE (73 aa)) are a coiled coil.

This sequence belongs to the ZapB family. Homodimer. The ends of the coiled-coil dimer bind to each other, forming polymers. Interacts with FtsZ.

The protein localises to the cytoplasm. Its function is as follows. Non-essential, abundant cell division factor that is required for proper Z-ring formation. It is recruited early to the divisome by direct interaction with FtsZ, stimulating Z-ring assembly and thereby promoting cell division earlier in the cell cycle. Its recruitment to the Z-ring requires functional FtsA or ZipA. This is Cell division protein ZapB from Yersinia enterocolitica serotype O:8 / biotype 1B (strain NCTC 13174 / 8081).